A 406-amino-acid chain; its full sequence is Elongation factor Tu-A (406 aa).

Residues 10 to 215 enclose the tr-type G domain; it reads KPHVNVGTIG…AIDEYIPTPV (206 aa). Residues 19–26 are G1; it reads GHVDHGKT. A GTP-binding site is contributed by 19–26; that stretch reads GHVDHGKT. T26 is a binding site for Mg(2+). Residues 61–65 form a G2 region; sequence GITIN. The segment at 82–85 is G3; that stretch reads DCPG. Residues 82 to 86 and 137 to 140 contribute to the GTP site; these read DCPGH and NKVD. Positions 137–140 are G4; it reads NKVD. Residues 175 to 177 are G5; the sequence is SAL. Residue T395 is modified to Phosphothreonine.

It belongs to the TRAFAC class translation factor GTPase superfamily. Classic translation factor GTPase family. EF-Tu/EF-1A subfamily. As to quaternary structure, monomer. Binds to the 70S ribosome, contacts tmRNA during trans-translation. Phosphorylated on a threonine.

Its subcellular location is the cytoplasm. It carries out the reaction GTP + H2O = GDP + phosphate + H(+). In terms of biological role, GTP hydrolase that promotes the GTP-dependent binding of aminoacyl-tRNA to the A-site of ribosomes during protein biosynthesis. Its function is as follows. EF-Tu-GDP binds to the acceptor arm of tmRNA by interacting with its acceptor arm, suggesting that GTP hydrolysis by EF-Tu is essential for tmRNA function. Functionally, protects glycyl-tRNA(Gly) from hydrolysis by E.coli D-aminoacyl-tRNA deacylase (dtd). The polypeptide is Elongation factor Tu-A (Thermus thermophilus (strain ATCC 27634 / DSM 579 / HB8)).